The chain runs to 381 residues: Choline transport ATP-binding protein OpuBA (381 aa).

The ABC transporter domain maps to 2–236 (LTLENVSKTY…PADEFVEEFI (235 aa)). Position 35–42 (35–42 (GPSGCGKT)) interacts with ATP. CBS domains follow at residues 256-314 (MNTQ…LVSE) and 316-374 (LHED…WGEE).

Belongs to the ABC transporter superfamily.

Functionally, involved in a high affinity multicomponent binding-protein-dependent transport system for choline. Probably responsible for energy coupling to the transport system. The sequence is that of Choline transport ATP-binding protein OpuBA (opuBA) from Bacillus subtilis (strain 168).